The primary structure comprises 186 residues: MKLIAGLGNPGKKYERTRHNVGFMVVDELSFRHQTPWKKSKFNGMTSEIIVGGEKMILVKPLTFMNASGECIRPLMDYYNIPIEDVVIVYDDLDLPVGKIRLRQKGSAGGHNGMKSIIQHVKTQEFNRIRVGVSRPLKGEVIHYVLGDFPKAEQPDIIAAIQKSADAIEDFAQTPFIEVMNKYNQK.

Residue Tyr14 participates in tRNA binding. Catalysis depends on His19, which acts as the Proton acceptor. Residues Phe64, Asn66, and Asn112 each coordinate tRNA.

It belongs to the PTH family. Monomer.

It is found in the cytoplasm. It carries out the reaction an N-acyl-L-alpha-aminoacyl-tRNA + H2O = an N-acyl-L-amino acid + a tRNA + H(+). Hydrolyzes ribosome-free peptidyl-tRNAs (with 1 or more amino acids incorporated), which drop off the ribosome during protein synthesis, or as a result of ribosome stalling. Its function is as follows. Catalyzes the release of premature peptidyl moieties from peptidyl-tRNA molecules trapped in stalled 50S ribosomal subunits, and thus maintains levels of free tRNAs and 50S ribosomes. This Listeria monocytogenes serotype 4b (strain CLIP80459) protein is Peptidyl-tRNA hydrolase.